A 359-amino-acid chain; its full sequence is Phospho-N-acetylmuramoyl-pentapeptide-transferase (359 aa).

10 helical membrane-spanning segments follow: residues 3–23 (QILIAVAVALTVSILLTPALI), 55–75 (VAIIAGIWAGYLGTHLAGLAF), 80–100 (ISASGLLVLGLATVLGIVGFL), 117–137 (TAKTIGQVAAAVLFGVLALGF), 156–176 (IATVTLAPGLFVLFCVVVVSA), 187–207 (LDGLAAGSMAMVTAAYVLITF), 231–251 (LAIVAAATAGACIGFLWWNAA), 255–275 (IFMGDTGSLALGGIIAGISVT), 280–300 (ILAVVLGSLFVAEVSSVVLQI), and 334–354 (FWLLTAIACGLGVALFYGEWL).

Belongs to the glycosyltransferase 4 family. MraY subfamily. The cofactor is Mg(2+).

The protein localises to the cell membrane. The catalysed reaction is UDP-N-acetyl-alpha-D-muramoyl-L-alanyl-gamma-D-glutamyl-meso-2,6-diaminopimeloyl-D-alanyl-D-alanine + di-trans,octa-cis-undecaprenyl phosphate = di-trans,octa-cis-undecaprenyl diphospho-N-acetyl-alpha-D-muramoyl-L-alanyl-D-glutamyl-meso-2,6-diaminopimeloyl-D-alanyl-D-alanine + UMP. Its pathway is cell wall biogenesis; peptidoglycan biosynthesis. Catalyzes the initial step of the lipid cycle reactions in the biosynthesis of the cell wall peptidoglycan: transfers peptidoglycan precursor phospho-MurNAc-pentapeptide from UDP-MurNAc-pentapeptide onto the lipid carrier undecaprenyl phosphate, yielding undecaprenyl-pyrophosphoryl-MurNAc-pentapeptide, known as lipid I. In Mycolicibacterium paratuberculosis (strain ATCC BAA-968 / K-10) (Mycobacterium paratuberculosis), this protein is Phospho-N-acetylmuramoyl-pentapeptide-transferase.